Reading from the N-terminus, the 253-residue chain is Large ribosomal subunit protein bL28m (253 aa).

A mitochondrion-targeting transit peptide spans 1 to 55 (MPLHKYPPALWDVLKLKDGIYARLPEHYRRSLLEKHKPYPVHWKPHGLKYRLNPK).

Belongs to the bacterial ribosomal protein bL28 family. In terms of assembly, component of the mitochondrial ribosome large subunit (39S) which comprises a 16S rRNA and about 50 distinct proteins.

The protein localises to the mitochondrion. The protein is Large ribosomal subunit protein bL28m (mrpl28) of Xenopus laevis (African clawed frog).